We begin with the raw amino-acid sequence, 577 residues long: Arginine--tRNA ligase (577 aa).

Residues 122–132 (PNVAKEMHVGH) carry the 'HIGH' region motif.

Belongs to the class-I aminoacyl-tRNA synthetase family. Monomer.

It localises to the cytoplasm. It catalyses the reaction tRNA(Arg) + L-arginine + ATP = L-arginyl-tRNA(Arg) + AMP + diphosphate. This is Arginine--tRNA ligase from Salmonella arizonae (strain ATCC BAA-731 / CDC346-86 / RSK2980).